The sequence spans 140 residues: Profilin-2 (140 aa).

Position 2 is an N-acetylalanine (A2).

The protein belongs to the profilin family. In terms of assembly, occurs in many kinds of cells as a complex with monomeric actin in a 1:1 ratio. Interacts with PFN2. Interacts with ACTMAP (via N-terminus); the interaction may facilitate efficient cleavage of the acetylated N-terminus of immature actin by ACTMAP.

Its subcellular location is the cytoplasm. The protein resides in the cytoskeleton. Its function is as follows. Binds to actin and affects the structure of the cytoskeleton. At high concentrations, profilin prevents the polymerization of actin, whereas it enhances it at low concentrations. By binding to PIP2, it inhibits the formation of IP3 and DG. The chain is Profilin-2 (PFN2) from Bos taurus (Bovine).